The primary structure comprises 121 residues: Regulator of ribonuclease activity B (121 aa).

It belongs to the RraB family. In terms of assembly, interacts with the C-terminal region of Rne.

Its subcellular location is the cytoplasm. Its function is as follows. Globally modulates RNA abundance by binding to RNase E (Rne) and regulating its endonucleolytic activity. Can modulate Rne action in a substrate-dependent manner by altering the composition of the degradosome. In Psychromonas ingrahamii (strain DSM 17664 / CCUG 51855 / 37), this protein is Regulator of ribonuclease activity B.